The chain runs to 166 residues: Cytochrome c-type biogenesis protein CcmE (166 aa).

Residues M1–R7 are Cytoplasmic-facing. A helical; Signal-anchor for type II membrane protein membrane pass occupies residues L8–A28. Residues L29 to Y166 are Periplasmic-facing. Residues H122 and Y126 each contribute to the heme site. A disordered region spans residues G139–Y166.

The protein belongs to the CcmE/CycJ family.

It is found in the cell inner membrane. In terms of biological role, heme chaperone required for the biogenesis of c-type cytochromes. Transiently binds heme delivered by CcmC and transfers the heme to apo-cytochromes in a process facilitated by CcmF and CcmH. The chain is Cytochrome c-type biogenesis protein CcmE from Methylocella silvestris (strain DSM 15510 / CIP 108128 / LMG 27833 / NCIMB 13906 / BL2).